The sequence spans 93 residues: U8-theraphotoxin-Hs1b (93 aa).

The signal sequence occupies residues 1–18 (MKAILLLAIFSVLTVAIC). Cystine bridges form between cysteine 40–cysteine 54, cysteine 40–cysteine 81, cysteine 53–cysteine 66, and cysteine 84–cysteine 91.

This sequence belongs to the neurotoxin 27 (Jztx-72) family. ICK-72 subfamily. Expressed by the venom gland.

The protein resides in the secreted. In terms of biological role, probable neurotoxin with ion channel impairing activity. The sequence is that of U8-theraphotoxin-Hs1b from Cyriopagopus schmidti (Chinese bird spider).